Reading from the N-terminus, the 193-residue chain is Oligoribonuclease (193 aa).

The region spanning 20-183 (FVWLDCEMTG…ADVHESIEEL (164 aa)) is the Exonuclease domain. The active site involves tyrosine 141.

Belongs to the oligoribonuclease family.

Its subcellular location is the cytoplasm. In terms of biological role, 3'-to-5' exoribonuclease specific for small oligoribonucleotides. The sequence is that of Oligoribonuclease from Paracidovorax citrulli (strain AAC00-1) (Acidovorax citrulli).